The chain runs to 759 residues: Protein transport protein sec23-1 (759 aa).

Residues Cys56, Cys60, Cys79, and Cys82 each contribute to the Zn(2+) site.

The protein belongs to the SEC23/SEC24 family. SEC23 subfamily. As to quaternary structure, the COPII coat is composed of at least 5 proteins: the sec23/24 complex, the sec13/31 complex, and the protein sar1.

Its subcellular location is the cytoplasm. It is found in the cytoplasmic vesicle. The protein localises to the COPII-coated vesicle membrane. It localises to the endoplasmic reticulum membrane. The protein resides in the golgi apparatus membrane. Functionally, component of the coat protein complex II (COPII) which promotes the formation of transport vesicles from the endoplasmic reticulum (ER). The coat has two main functions, the physical deformation of the endoplasmic reticulum membrane into vesicles and the selection of cargo molecules. The protein is Protein transport protein sec23-1 (sec231) of Schizosaccharomyces pombe (strain 972 / ATCC 24843) (Fission yeast).